Reading from the N-terminus, the 1258-residue chain is Splicing factor, arginine/serine-rich 19 (1258 aa).

Disordered stretches follow at residues 1–32, 159–345, 370–398, 410–1034, 1114–1154, and 1223–1258; these read MEEE…LSPS, KTVS…PRRR, GGPA…EEEP, PRQP…PPPM, GSLP…DKYL, and FRKH…LPPL. Residues 7 to 27 show a composition bias toward basic and acidic residues; that stretch reads SRGKTEESGEDRGDGPPDRDP. Low complexity predominate over residues 193 to 207; it reads SSASSSPSPSPSSSS. Positions 208–223 are enriched in pro residues; it reads PSPPPPPPPPPPPALP. Positions 228 to 237 are enriched in basic and acidic residues; it reads DIYDPFHPTD. At serine 241 the chain carries Phosphoserine. A compositionally biased stretch (polar residues) spans 256 to 266; the sequence is TGSNPSSSAGT. Acidic residues predominate over residues 269-283; that stretch reads PEEEEEEEEEEEEEG. Threonine 329 carries the phosphothreonine modification. Positions 374–383 are enriched in pro residues; sequence LPLPPLPPTD. Acidic residues predominate over residues 384–395; it reads PEIEEGEIVQPE. Residues 414 to 426 are compositionally biased toward low complexity; that stretch reads PASVATLASVAAP. Phosphoserine is present on residues serine 444 and serine 449. Basic residues predominate over residues 480 to 491; sequence KILTQRRERYRQ. Serine 493, serine 495, serine 512, and serine 520 each carry phosphoserine. 2 stretches are compositionally biased toward basic residues: residues 540–555 and 562–579; these read TARR…RSRS and RGSH…RRRS. 2 positions are modified to phosphoserine: serine 579 and serine 581. Basic residues predominate over residues 594 to 613; sequence RERHRGKRREGGKKKKKRSR. Basic and acidic residues predominate over residues 614 to 625; the sequence is SRAEKRSGDLEK. Residue threonine 665 is modified to Phosphothreonine. 2 positions are modified to phosphoserine: serine 678 and serine 684. Position 691 is a phosphotyrosine (tyrosine 691). Serine 693 and serine 697 each carry phosphoserine. Basic and acidic residues-rich tracts occupy residues 698 to 711 and 721 to 743; these read ADER…DRRR and SREK…DRSS. Low complexity-rich tracts occupy residues 752–777 and 795–806; these read SAPG…SCSS and SSTTPAKDSSSS. Lysine 814 is covalently cross-linked (Glycyl lysine isopeptide (Lys-Gly) (interchain with G-Cter in SUMO2)). Residues 815–833 are compositionally biased toward basic and acidic residues; the sequence is FSRDRESRSPFLKPDERAP. 2 positions are modified to phosphoserine: serine 821 and serine 823. The segment covering 845-877 has biased composition (basic residues); the sequence is KPKKTKAKAKAGAKKAKGTKGKTKPSKTRKKVR. Serine 878, serine 885, serine 912, and serine 914 each carry phosphoserine. The segment covering 924–937 has biased composition (pro residues); sequence STPPPKVAPPPPAL. Threonine 925 and threonine 938 each carry phosphothreonine. Residues 940–949 are compositionally biased toward polar residues; it reads DSQTVDSSCK. A Phosphoserine modification is found at serine 941. Threonine 950 bears the Phosphothreonine mark. Residues 971–986 are compositionally biased toward acidic residues; that stretch reads EEEEEEEEEEEEEEEQ. Residues 987–1019 are compositionally biased toward low complexity; that stretch reads QPATTTATSTAAAAPSTAPSAGSTAGDSGAEDG. The interval 1133–1258 is necessary for interaction with the CTD domain of POLR2A; it reads PASDKREGSS…GGPGLPLPPL (126 aa). Positions 1135-1154 are enriched in basic and acidic residues; it reads SDKREGSSSSEGRGDTDKYL. Residues 1246 to 1258 show a composition bias toward pro residues; the sequence is PDKGGPGLPLPPL.

Belongs to the splicing factor SR family. As to quaternary structure, interacts with POLR2A.

The protein resides in the nucleus. Functionally, may function in pre-mRNA splicing. The protein is Splicing factor, arginine/serine-rich 19 (Scaf1) of Rattus norvegicus (Rat).